Here is a 167-residue protein sequence, read N- to C-terminus: Large ribosomal subunit protein uL10 (167 aa).

This sequence belongs to the universal ribosomal protein uL10 family. Part of the ribosomal stalk of the 50S ribosomal subunit. The N-terminus interacts with L11 and the large rRNA to form the base of the stalk. The C-terminus forms an elongated spine to which L12 dimers bind in a sequential fashion forming a multimeric L10(L12)X complex.

Its function is as follows. Forms part of the ribosomal stalk, playing a central role in the interaction of the ribosome with GTP-bound translation factors. The protein is Large ribosomal subunit protein uL10 of Dichelobacter nodosus (strain VCS1703A).